Reading from the N-terminus, the 147-residue chain is MADSGTAGGAALAAPAPGPGSGGPGPRVYFQSPPGAAGEGPGGADDEGPVRRQGKVTVKYDRKELRKRLNLEEWILEQLTRLYDCQEEEIPELEIDVDELLDMESDDARAARVKELLVDCYKPTEAFISGLLDKIRGMQKLSTPQKK.

The disordered stretch occupies residues 1–55 (MADSGTAGGAALAAPAPGPGSGGPGPRVYFQSPPGAAGEGPGGADDEGPVRRQGK). Position 2 is an N-acetylalanine (alanine 2). At serine 21 the chain carries Phosphoserine. Tyrosine 29 is subject to Phosphotyrosine. Phosphoserine is present on serine 32. Position 57 is a phosphothreonine (threonine 57). Positions 61-103 (DRKELRKRLNLEEWILEQLTRLYDCQEEEIPELEIDVDELLDM) form a coiled coil.

It belongs to the PP1 inhibitor family. Post-translationally, phosphorylated primarily on Thr-57 by PKC (in vitro). An unknown Ser is also phosphorylated by PKC (in vitro). In terms of tissue distribution, ubiquitous. Expressed at low levels.

Its subcellular location is the cytoplasm. Functionally, inhibitor of PPP1CA. Has over 50-fold higher inhibitory activity when phosphorylated. The protein is Protein phosphatase 1 regulatory subunit 14B (PPP1R14B) of Homo sapiens (Human).